A 1225-amino-acid polypeptide reads, in one-letter code: Structural maintenance of chromosomes protein 1 (1225 aa).

Position 33–40 (33–40) interacts with ATP; that stretch reads GPNGSGKS. Positions 173–489 form a coiled coil; it reads SGSIQYKKEY…SANNQEYDLN (317 aa). The SMC hinge domain maps to 527-641; sequence PGVKGLVHDL…CNTLNIAKDL (115 aa). Residues 679–1063 adopt a coiled-coil conformation; the sequence is KEEYQSLMSL…LKIKKKRKEL (385 aa). Positions 1057-1061 match the Nuclear localization signal motif; the sequence is KKKRK.

It belongs to the SMC family. SMC1 subfamily. In terms of assembly, cohesin complexes are composed of the SMC1 and SMC3 heterodimer attached via their SMC hinge domain, MCD1/SCC1 which link them, and IRR1/SCC3, which interacts with MCD1. The cohesin complex also interacts with SCC2, which is required for its association with chromosomes.

The protein localises to the nucleus. It is found in the chromosome. Functionally, involved in chromosome cohesion during cell cycle and in DNA repair. Central component of cohesin complex. The cohesin complex is required for the cohesion of sister chromatids after DNA replication. The cohesin complex apparently forms a large proteinaceous ring within which sister chromatids can be trapped. At anaphase, the complex is cleaved and dissociates from chromatin, allowing sister chromatids to segregate. In Saccharomyces cerevisiae (strain ATCC 204508 / S288c) (Baker's yeast), this protein is Structural maintenance of chromosomes protein 1 (SMC1).